The chain runs to 275 residues: Shikimate dehydrogenase (NADP(+)) (275 aa).

Shikimate contacts are provided by residues 17–19 and Thr64; that span reads SKS. Lys68 acts as the Proton acceptor in catalysis. An NADP(+)-binding site is contributed by Glu80. Shikimate-binding residues include Asn89 and Asp105. NADP(+) contacts are provided by residues 129–133, 152–157, and Met216; these read GAGGA and NRTFFK. Tyr218 contributes to the shikimate binding site. Residue Gly240 participates in NADP(+) binding.

Belongs to the shikimate dehydrogenase family. As to quaternary structure, homodimer.

It catalyses the reaction shikimate + NADP(+) = 3-dehydroshikimate + NADPH + H(+). It participates in metabolic intermediate biosynthesis; chorismate biosynthesis; chorismate from D-erythrose 4-phosphate and phosphoenolpyruvate: step 4/7. In terms of biological role, involved in the biosynthesis of the chorismate, which leads to the biosynthesis of aromatic amino acids. Catalyzes the reversible NADPH linked reduction of 3-dehydroshikimate (DHSA) to yield shikimate (SA). The polypeptide is Shikimate dehydrogenase (NADP(+)) (Pectobacterium atrosepticum (strain SCRI 1043 / ATCC BAA-672) (Erwinia carotovora subsp. atroseptica)).